Here is a 276-residue protein sequence, read N- to C-terminus: Bis(5'-nucleosyl)-tetraphosphatase, symmetrical (276 aa).

This sequence belongs to the Ap4A hydrolase family.

It carries out the reaction P(1),P(4)-bis(5'-adenosyl) tetraphosphate + H2O = 2 ADP + 2 H(+). Its function is as follows. Hydrolyzes diadenosine 5',5'''-P1,P4-tetraphosphate to yield ADP. The chain is Bis(5'-nucleosyl)-tetraphosphatase, symmetrical from Tolumonas auensis (strain DSM 9187 / NBRC 110442 / TA 4).